The primary structure comprises 499 residues: Glycerol kinase (499 aa).

Thr12 serves as a coordination point for ADP. Residues Thr12, Thr13, and Ser14 each coordinate ATP. Thr12 provides a ligand contact to sn-glycerol 3-phosphate. Arg16 serves as a coordination point for ADP. The sn-glycerol 3-phosphate site is built by Arg82, Glu83, Tyr134, and Asp240. Arg82, Glu83, Tyr134, Asp240, and Gln241 together coordinate glycerol. Residues Thr262 and Gly306 each contribute to the ADP site. ATP is bound by residues Thr262, Gly306, Gln310, and Gly412. Residues Gly412 and Asn416 each coordinate ADP.

Belongs to the FGGY kinase family.

It carries out the reaction glycerol + ATP = sn-glycerol 3-phosphate + ADP + H(+). Its pathway is polyol metabolism; glycerol degradation via glycerol kinase pathway; sn-glycerol 3-phosphate from glycerol: step 1/1. With respect to regulation, inhibited by fructose 1,6-bisphosphate (FBP). In terms of biological role, key enzyme in the regulation of glycerol uptake and metabolism. Catalyzes the phosphorylation of glycerol to yield sn-glycerol 3-phosphate. The chain is Glycerol kinase from Nocardia farcinica (strain IFM 10152).